The primary structure comprises 199 residues: Recombination protein RecR (199 aa).

Residues 58–73 form a C4-type zinc finger; that stretch reads CARCGNITSADLCDIC. A Toprim domain is found at 81–176; sequence GELCVVEDVA…QVTSLAQGVP (96 aa).

The protein belongs to the RecR family.

In terms of biological role, may play a role in DNA repair. It seems to be involved in an RecBC-independent recombinational process of DNA repair. It may act with RecF and RecO. The sequence is that of Recombination protein RecR from Cereibacter sphaeroides (strain ATCC 17025 / ATH 2.4.3) (Rhodobacter sphaeroides).